Here is a 236-residue protein sequence, read N- to C-terminus: Ubiquinone biosynthesis O-methyltransferase (236 aa).

R39, G59, D80, and M124 together coordinate S-adenosyl-L-methionine.

The protein belongs to the methyltransferase superfamily. UbiG/COQ3 family.

It catalyses the reaction a 3-demethylubiquinol + S-adenosyl-L-methionine = a ubiquinol + S-adenosyl-L-homocysteine + H(+). It carries out the reaction a 3-(all-trans-polyprenyl)benzene-1,2-diol + S-adenosyl-L-methionine = a 2-methoxy-6-(all-trans-polyprenyl)phenol + S-adenosyl-L-homocysteine + H(+). It participates in cofactor biosynthesis; ubiquinone biosynthesis. Functionally, O-methyltransferase that catalyzes the 2 O-methylation steps in the ubiquinone biosynthetic pathway. The polypeptide is Ubiquinone biosynthesis O-methyltransferase (Shewanella oneidensis (strain ATCC 700550 / JCM 31522 / CIP 106686 / LMG 19005 / NCIMB 14063 / MR-1)).